Consider the following 192-residue polypeptide: Protein GrpE (192 aa).

The disordered stretch occupies residues 1–43; that stretch reads MSKEEFPHEKDLKDEVTPDKAPKKDPKAASKEEVKEDPAKDYE.

Belongs to the GrpE family. As to quaternary structure, homodimer.

The protein resides in the cytoplasm. Participates actively in the response to hyperosmotic and heat shock by preventing the aggregation of stress-denatured proteins, in association with DnaK and GrpE. It is the nucleotide exchange factor for DnaK and may function as a thermosensor. Unfolded proteins bind initially to DnaJ; upon interaction with the DnaJ-bound protein, DnaK hydrolyzes its bound ATP, resulting in the formation of a stable complex. GrpE releases ADP from DnaK; ATP binding to DnaK triggers the release of the substrate protein, thus completing the reaction cycle. Several rounds of ATP-dependent interactions between DnaJ, DnaK and GrpE are required for fully efficient folding. The chain is Protein GrpE from Lactobacillus gasseri (strain ATCC 33323 / DSM 20243 / BCRC 14619 / CIP 102991 / JCM 1131 / KCTC 3163 / NCIMB 11718 / NCTC 13722 / AM63).